Reading from the N-terminus, the 592-residue chain is Beta-xylosidase (592 aa).

The signal sequence occupies residues methionine 1–alanine 19. Cysteine 20 is lipidated: N-palmitoyl cysteine. The S-diacylglycerol cysteine moiety is linked to residue cysteine 20.

The protein belongs to the glycosyl hydrolase 43 family.

It is found in the cell outer membrane. Functionally, xylosidase involved in ulvan degradation. Ulvan is the main polysaccharide component of the Ulvales (green seaweed) cell wall. It is composed of disaccharide building blocks comprising 3-sulfated rhamnose (Rha3S) linked to D-glucuronic acid (GlcA), L-iduronic acid (IduA), or D-xylose (Xyl). Beta-xylosidase converts Xyl-Rha3S, a product of alpha-L-rhamnosidase acting on Rha-Xyl-Rha3S oligosaccharides, further to Xyl and Rha3S. This chain is Beta-xylosidase, found in Formosa agariphila (strain DSM 15362 / KCTC 12365 / LMG 23005 / KMM 3901 / M-2Alg 35-1).